Reading from the N-terminus, the 107-residue chain is U1-lycotoxin-Ls1s (107 aa).

A signal peptide spans 1 to 20 (MMKVLVVVALLVTLISYSSS). The propeptide occupies 21–41 (EGIDDLEADELLSLMANEQTR). 4 cysteine pairs are disulfide-bonded: cysteine 44-cysteine 59, cysteine 51-cysteine 68, cysteine 58-cysteine 86, and cysteine 70-cysteine 84.

Belongs to the neurotoxin 19 (CSTX) family. 04 (U1-Lctx) subfamily. Expressed by the venom gland.

It localises to the secreted. The chain is U1-lycotoxin-Ls1s from Lycosa singoriensis (Wolf spider).